The primary structure comprises 212 residues: Large ribosomal subunit protein mL48 (212 aa).

The N-terminal 28 residues, 1–28 (MNGALGKVLCLKNDTIFKQAFSLLRFRT), are a transit peptide targeting the mitochondrion. At Lys199 the chain carries N6-succinyllysine.

The protein belongs to the mitochondrion-specific ribosomal protein mL48 family. As to quaternary structure, component of the mitochondrial ribosome large subunit (39S) which comprises a 16S rRNA and about 50 distinct proteins. Interacts with OXA1L.

It is found in the mitochondrion. The protein is Large ribosomal subunit protein mL48 (MRPL48) of Bos taurus (Bovine).